A 342-amino-acid chain; its full sequence is tRNA N6-adenosine threonylcarbamoyltransferase (342 aa).

His115 and His119 together coordinate Fe cation. Substrate-binding positions include Ile137 to Gly141, Asp170, Gly183, Asp187, and Asn276. Asp304 contributes to the Fe cation binding site.

Belongs to the KAE1 / TsaD family. It depends on Fe(2+) as a cofactor.

Its subcellular location is the cytoplasm. The enzyme catalyses L-threonylcarbamoyladenylate + adenosine(37) in tRNA = N(6)-L-threonylcarbamoyladenosine(37) in tRNA + AMP + H(+). In terms of biological role, required for the formation of a threonylcarbamoyl group on adenosine at position 37 (t(6)A37) in tRNAs that read codons beginning with adenine. Is involved in the transfer of the threonylcarbamoyl moiety of threonylcarbamoyl-AMP (TC-AMP) to the N6 group of A37, together with TsaE and TsaB. TsaD likely plays a direct catalytic role in this reaction. The sequence is that of tRNA N6-adenosine threonylcarbamoyltransferase from Staphylococcus haemolyticus (strain JCSC1435).